A 467-amino-acid chain; its full sequence is Bifunctional protein GlmU (467 aa).

Positions 1–229 (MEKNTIILAA…FSESMGVNDR (229 aa)) are pyrophosphorylase. Residues 8–11 (LAAG), Lys22, Gln72, 77–78 (GT), 100–102 (SGD), Gly139, Glu154, Asn169, and Asn227 contribute to the UDP-N-acetyl-alpha-D-glucosamine site. Asp102 contributes to the Mg(2+) binding site. A Mg(2+)-binding site is contributed by Asn227. The interval 230 to 250 (LALSKATKVMQRRINEEHMVN) is linker. Positions 251–467 (GVTIIDPENT…ALKAEEENNK (217 aa)) are N-acetyltransferase. Residues Arg332 and Lys350 each contribute to the UDP-N-acetyl-alpha-D-glucosamine site. The active-site Proton acceptor is the His362. The UDP-N-acetyl-alpha-D-glucosamine site is built by Tyr365 and Asn376. Acetyl-CoA contacts are provided by residues 385-386 (NY), Ser404, Ala422, and Arg439.

In the N-terminal section; belongs to the N-acetylglucosamine-1-phosphate uridyltransferase family. It in the C-terminal section; belongs to the transferase hexapeptide repeat family. In terms of assembly, homotrimer. The cofactor is Mg(2+).

The protein resides in the cytoplasm. The enzyme catalyses alpha-D-glucosamine 1-phosphate + acetyl-CoA = N-acetyl-alpha-D-glucosamine 1-phosphate + CoA + H(+). It carries out the reaction N-acetyl-alpha-D-glucosamine 1-phosphate + UTP + H(+) = UDP-N-acetyl-alpha-D-glucosamine + diphosphate. Its pathway is nucleotide-sugar biosynthesis; UDP-N-acetyl-alpha-D-glucosamine biosynthesis; N-acetyl-alpha-D-glucosamine 1-phosphate from alpha-D-glucosamine 6-phosphate (route II): step 2/2. It participates in nucleotide-sugar biosynthesis; UDP-N-acetyl-alpha-D-glucosamine biosynthesis; UDP-N-acetyl-alpha-D-glucosamine from N-acetyl-alpha-D-glucosamine 1-phosphate: step 1/1. The protein operates within bacterial outer membrane biogenesis; LPS lipid A biosynthesis. Its function is as follows. Catalyzes the last two sequential reactions in the de novo biosynthetic pathway for UDP-N-acetylglucosamine (UDP-GlcNAc). The C-terminal domain catalyzes the transfer of acetyl group from acetyl coenzyme A to glucosamine-1-phosphate (GlcN-1-P) to produce N-acetylglucosamine-1-phosphate (GlcNAc-1-P), which is converted into UDP-GlcNAc by the transfer of uridine 5-monophosphate (from uridine 5-triphosphate), a reaction catalyzed by the N-terminal domain. The sequence is that of Bifunctional protein GlmU from Pediococcus pentosaceus (strain ATCC 25745 / CCUG 21536 / LMG 10740 / 183-1w).